A 106-amino-acid polypeptide reads, in one-letter code: Large ribosomal subunit protein uL24 (106 aa).

Over residues 84 to 97 (EKIGRELGAKEKAR) the composition is skewed to basic and acidic residues. Residues 84 to 106 (EKIGRELGAKEKARLQKRKAAAK) are disordered.

This sequence belongs to the universal ribosomal protein uL24 family. As to quaternary structure, part of the 50S ribosomal subunit.

Functionally, one of two assembly initiator proteins, it binds directly to the 5'-end of the 23S rRNA, where it nucleates assembly of the 50S subunit. One of the proteins that surrounds the polypeptide exit tunnel on the outside of the subunit. The protein is Large ribosomal subunit protein uL24 of Anaeromyxobacter dehalogenans (strain 2CP-C).